An 801-amino-acid polypeptide reads, in one-letter code: Growth-differentiation transition protein 7 (801 aa).

Residues 1–22 (MIKTILIKLILLVIFCYHFLFA) form the signal peptide.

Belongs to the GDT family.

Its subcellular location is the secreted. The polypeptide is Growth-differentiation transition protein 7 (gdt7) (Dictyostelium discoideum (Social amoeba)).